A 240-amino-acid chain; its full sequence is 1-(5-phosphoribosyl)-5-[(5-phosphoribosylamino)methylideneamino] imidazole-4-carboxamide isomerase (240 aa).

Asp8 serves as the catalytic Proton acceptor. The active-site Proton donor is the Asp129.

This sequence belongs to the HisA/HisF family.

The protein localises to the cytoplasm. The catalysed reaction is 1-(5-phospho-beta-D-ribosyl)-5-[(5-phospho-beta-D-ribosylamino)methylideneamino]imidazole-4-carboxamide = 5-[(5-phospho-1-deoxy-D-ribulos-1-ylimino)methylamino]-1-(5-phospho-beta-D-ribosyl)imidazole-4-carboxamide. It functions in the pathway amino-acid biosynthesis; L-histidine biosynthesis; L-histidine from 5-phospho-alpha-D-ribose 1-diphosphate: step 4/9. This is 1-(5-phosphoribosyl)-5-[(5-phosphoribosylamino)methylideneamino] imidazole-4-carboxamide isomerase from Oceanobacillus iheyensis (strain DSM 14371 / CIP 107618 / JCM 11309 / KCTC 3954 / HTE831).